A 97-amino-acid polypeptide reads, in one-letter code: Putative septation protein SpoVG (97 aa).

Belongs to the SpoVG family.

In terms of biological role, could be involved in septation. The sequence is that of Putative septation protein SpoVG from Borrelia garinii subsp. bavariensis (strain ATCC BAA-2496 / DSM 23469 / PBi) (Borreliella bavariensis).